Consider the following 275-residue polypeptide: Anamorsin homolog (275 aa).

Residues 1–147 form an N-terminal SAM-like domain region; it reads MTSASIHIGS…QSASSAAATG (147 aa). The tract at residues 148–183 is linker; that stretch reads RINLGGAKTKVKLSLDDDDDDQLIDEDDLLNGGGGM. Residues Cys-203, Cys-209, Cys-212, and Cys-214 each coordinate [2Fe-2S] cluster. A fe-S binding site A region spans residues 203 to 214; that stretch reads CGGRKACDNCTC. [4Fe-4S] cluster is bound by residues Cys-238, Cys-241, Cys-249, and Cys-252. 2 short sequence motifs (cx2C motif) span residues 238-241 and 249-252; these read CGNC and CAGC. The interval 238 to 252 is fe-S binding site B; it reads CGNCAKGDAFRCAGC.

It belongs to the anamorsin family. Monomer. [2Fe-2S] cluster serves as cofactor. It depends on [4Fe-4S] cluster as a cofactor.

The protein resides in the cytoplasm. It is found in the mitochondrion intermembrane space. Component of the cytosolic iron-sulfur (Fe-S) protein assembly (CIA) machinery. Required for the maturation of extramitochondrial Fe-S proteins. Part of an electron transfer chain functioning in an early step of cytosolic Fe-S biogenesis, facilitating the de novo assembly of a [4Fe-4S] cluster on the cytosolic Fe-S scaffold complex. Electrons are transferred from NADPH via a FAD- and FMN-containing diflavin oxidoreductase. Together with the diflavin oxidoreductase, also required for the assembly of the diferric tyrosyl radical cofactor of ribonucleotide reductase (RNR), probably by providing electrons for reduction during radical cofactor maturation in the catalytic small subunit. The chain is Anamorsin homolog from Thalassiosira pseudonana (Marine diatom).